Reading from the N-terminus, the 54-residue chain is ATP synthase protein 8 (54 aa).

Residues 8-28 traverse the membrane as a helical segment; the sequence is WWIINFFIIWTAILLTLVILV.

Belongs to the ATPase protein 8 family. As to quaternary structure, F-type ATPases have 2 components, CF(1) - the catalytic core - and CF(0) - the membrane proton channel.

The protein resides in the mitochondrion membrane. Its function is as follows. Mitochondrial membrane ATP synthase (F(1)F(0) ATP synthase or Complex V) produces ATP from ADP in the presence of a proton gradient across the membrane which is generated by electron transport complexes of the respiratory chain. F-type ATPases consist of two structural domains, F(1) - containing the extramembraneous catalytic core and F(0) - containing the membrane proton channel, linked together by a central stalk and a peripheral stalk. During catalysis, ATP synthesis in the catalytic domain of F(1) is coupled via a rotary mechanism of the central stalk subunits to proton translocation. Part of the complex F(0) domain. Minor subunit located with subunit a in the membrane. This is ATP synthase protein 8 (MT-ATP8) from Paracentrotus lividus (Common sea urchin).